A 295-amino-acid polypeptide reads, in one-letter code: 4-hydroxy-tetrahydrodipicolinate synthase (295 aa).

Thr47 is a pyruvate binding site. Tyr135 functions as the Proton donor/acceptor in the catalytic mechanism. Lys163 acts as the Schiff-base intermediate with substrate in catalysis. A pyruvate-binding site is contributed by Ile206.

In terms of assembly, homodimer. In fact, exists in a monomer-dimer equilibrium in solution, shifted in favor of the dimer in presence of the substrate pyruvate; the monomer has significantly reduced activity compared with the dimer.

Its subcellular location is the cytoplasm. The enzyme catalyses L-aspartate 4-semialdehyde + pyruvate = (2S,4S)-4-hydroxy-2,3,4,5-tetrahydrodipicolinate + H2O + H(+). It functions in the pathway amino-acid biosynthesis; L-lysine biosynthesis via DAP pathway; (S)-tetrahydrodipicolinate from L-aspartate: step 3/4. Is insensitive to lysine-feedback inhibition. Shows ASA substrate inhibition. In terms of biological role, catalyzes the condensation of (S)-aspartate-beta-semialdehyde [(S)-ASA] and pyruvate to 4-hydroxy-tetrahydrodipicolinate (HTPA). The polypeptide is 4-hydroxy-tetrahydrodipicolinate synthase (Staphylococcus aureus (strain MRSA252)).